The following is a 113-amino-acid chain: Mediator of RNA polymerase II transcription subunit 22 (113 aa).

This sequence belongs to the Mediator complex subunit 22 family. As to quaternary structure, component of the Mediator complex.

It is found in the nucleus. Functionally, component of the Mediator complex, a coactivator involved in the regulated transcription of nearly all RNA polymerase II-dependent genes. Mediator functions as a bridge to convey information from gene-specific regulatory proteins to the basal RNA polymerase II transcription machinery. Mediator is recruited to promoters by direct interactions with regulatory proteins and serves as a scaffold for the assembly of a functional preinitiation complex with RNA polymerase II and the general transcription factors. This chain is Mediator of RNA polymerase II transcription subunit 22 (SRB6), found in Candida glabrata (strain ATCC 2001 / BCRC 20586 / JCM 3761 / NBRC 0622 / NRRL Y-65 / CBS 138) (Yeast).